A 285-amino-acid polypeptide reads, in one-letter code: Dihydropteroate synthase (285 aa).

A Pterin-binding domain is found at 25–271 (TLVMGILNVT…DVKQIARMAK (247 aa)). Residue N32 participates in Mg(2+) binding. (7,8-dihydropterin-6-yl)methyl diphosphate-binding positions include T72, D106, N125, D189, K225, and 259-261 (RVH).

It belongs to the DHPS family. The cofactor is Mg(2+).

It catalyses the reaction (7,8-dihydropterin-6-yl)methyl diphosphate + 4-aminobenzoate = 7,8-dihydropteroate + diphosphate. Its pathway is cofactor biosynthesis; tetrahydrofolate biosynthesis; 7,8-dihydrofolate from 2-amino-4-hydroxy-6-hydroxymethyl-7,8-dihydropteridine diphosphate and 4-aminobenzoate: step 1/2. Its function is as follows. Catalyzes the condensation of para-aminobenzoate (pABA) with 6-hydroxymethyl-7,8-dihydropterin diphosphate (DHPt-PP) to form 7,8-dihydropteroate (H2Pte), the immediate precursor of folate derivatives. The sequence is that of Dihydropteroate synthase (sul) from Bacillus subtilis (strain 168).